The following is a 572-amino-acid chain: Beta-fructofuranosidase, insoluble isoenzyme CWINV5 (572 aa).

A signal peptide spans 1–23 (MANIVWCNIAMFLLVSLFLTDDA). Substrate contacts are provided by residues 54–57 (WMND) and Gln73. Residue Asp57 is part of the active site. The N-linked (GlcNAc...) asparagine glycan is linked to Asn84. 118–119 (WS) contributes to the substrate binding site. N-linked (GlcNAc...) asparagine glycosylation is found at Asn152 and Asn179. Residues 184–185 (RD) and Glu239 each bind substrate. N-linked (GlcNAc...) asparagine glycans are attached at residues Asn333 and Asn438. Cys434 and Cys481 are joined by a disulfide.

Belongs to the glycosyl hydrolase 32 family. In terms of tissue distribution, expressed in flowers, and, to a lower extent, in leaves.

The protein localises to the secreted. It is found in the extracellular space. Its subcellular location is the apoplast. The protein resides in the cell wall. The enzyme catalyses Hydrolysis of terminal non-reducing beta-D-fructofuranoside residues in beta-D-fructofuranosides.. In Arabidopsis thaliana (Mouse-ear cress), this protein is Beta-fructofuranosidase, insoluble isoenzyme CWINV5 (CWINV5).